The chain runs to 207 residues: Superoxide dismutase [Mn] (207 aa).

Residues His-30, His-78, Asp-166, and His-170 each coordinate Mn(2+).

The protein belongs to the iron/manganese superoxide dismutase family. In terms of assembly, homodimer. The cofactor is Mn(2+).

It carries out the reaction 2 superoxide + 2 H(+) = H2O2 + O2. In terms of biological role, destroys superoxide anion radicals which are normally produced within the cells and which are toxic to biological systems. The protein is Superoxide dismutase [Mn] (sodA) of Chlamydia pneumoniae (Chlamydophila pneumoniae).